A 69-amino-acid chain; its full sequence is uncharacterized protein (69 aa).

The signal sequence occupies residues Met1–Ser21.

It localises to the secreted. This is an uncharacterized protein from Dictyostelium discoideum (Social amoeba).